Here is a 90-residue protein sequence, read N- to C-terminus: RNA-binding protein Hfq (90 aa).

The region spanning 9–69 is the Sm domain; sequence DRFLNHLRVN…ISTIIPSSYV (61 aa).

The protein belongs to the Hfq family. In terms of assembly, homohexamer.

In terms of biological role, RNA chaperone that binds small regulatory RNA (sRNAs) and mRNAs to facilitate mRNA translational regulation in response to envelope stress, environmental stress and changes in metabolite concentrations. Also binds with high specificity to tRNAs. This Thermotoga sp. (strain RQ2) protein is RNA-binding protein Hfq.